The following is an 88-amino-acid chain: UPF0297 protein EAT1b_2723 (88 aa).

Belongs to the UPF0297 family.

The chain is UPF0297 protein EAT1b_2723 from Exiguobacterium sp. (strain ATCC BAA-1283 / AT1b).